The sequence spans 407 residues: BTB/POZ and MATH domain-containing protein 1 (407 aa).

The region spanning 33–167 is the MATH domain; that stretch reads NGFHEFKICG…ENSLLVRCRV (135 aa). In terms of domain architecture, BTB spans 203–270; sequence CDVVFQVDGE…IYWDELPDMQ (68 aa).

It belongs to the Tdpoz family. Homodimer or heterodimer with BPM3, BPM5 and BPM6. Interacts with CUL3A and CUL3B. Interacts with RAP2-4 and RAP2-13. Binds to MYB56 at the promoter of FLOWERING LOCUS T (FT). Ubiquitous.

It localises to the nucleus. Its pathway is protein modification; protein ubiquitination. May act as a substrate-specific adapter of an E3 ubiquitin-protein ligase complex (CUL3-RBX1-BTB) which mediates the ubiquitination and subsequent proteasomal degradation of target proteins. This Arabidopsis thaliana (Mouse-ear cress) protein is BTB/POZ and MATH domain-containing protein 1 (BPM1).